The following is a 476-amino-acid chain: MTTVSSAFATVAEGAKVVTPRWKKNERNGKLRVMCRYGGSIVSPPQTKSPRYVGGDTRIVAIPSSAETSFASLVSHLTVTLKISYPFKVKYQLPDQELDSLISVEADEDVQIMMEEHGYLSSESSIPQSRIRLFLFPLKSQQSNEAGASQGDSDQCKVETDIDWLGIEESNKPIREELTQPVLQHPKTEMWFVDALKSVEMMQTRRTNSGTSGSGDGNGGICGQESMMLETNSSFGSTSSSVSSSNLPPIKSSGEDNIANSQVKFAPIESVTSNDNSAVTPIPSHELPSHSHAFENKPSSNLYVAELNRPVPVPISGYPPFMNQAQQQHIQVIYTGQPYITGNSPMTLPATAYHHTNHVYYQRPPQPYPIYYIPVEQYSSRHVQALPVKPSTVLNYHQVDSPVVRTSSPLAPEFSSQVYPLSKPVDSSVQTSSEATLNTTSRDAFIYNTDVDDDNDIAHAQIYKSQPPAPTLPSQY.

An N-terminal signal peptide occupies residues 1–14 (MTTVSSAFATVAEG). Residues 204–256 (TRRTNSGTSGSGDGNGGICGQESMMLETNSSFGSTSSSVSSSNLPPIKSSGED) are disordered. Residues 212–222 (SGSGDGNGGIC) are compositionally biased toward gly residues. A compositionally biased stretch (low complexity) spans 233 to 252 (SSFGSTSSSVSSSNLPPIKS).

As to quaternary structure, homodimer. Interacts with QKY and SUB/SCM at the plasma membrane. As to expression, observed in seedlings, roots, shoots, leaves, stems, inflorescence and flowers.

The protein resides in the cell membrane. It localises to the endomembrane system. Its function is as follows. Collaboratively with SUB and QKY, regulates cell growth anisotropy during gynoecium development, thus linking together cell-cell communication and cellular growth. In Arabidopsis thaliana (Mouse-ear cress), this protein is Protein PAL OF QUIRKY.